Reading from the N-terminus, the 237-residue chain is Putative glutathione-dependent formaldehyde-activating enzyme (237 aa).

The 115-residue stretch at 38–152 (ITLICHCPPS…LGQSGGSEGE (115 aa)) folds into the CENP-V/GFA domain. Cysteine 42, cysteine 44, cysteine 67, cysteine 69, cysteine 72, cysteine 114, and cysteine 117 together coordinate Zn(2+).

Belongs to the Gfa family. Zn(2+) serves as cofactor.

The catalysed reaction is S-(hydroxymethyl)glutathione = glutathione + formaldehyde. It participates in one-carbon metabolism; formaldehyde degradation; formate from formaldehyde (glutathione route): step 1/3. In terms of biological role, catalyzes the condensation of formaldehyde and glutathione to S-hydroxymethylglutathione. This chain is Putative glutathione-dependent formaldehyde-activating enzyme, found in Sordaria macrospora (strain ATCC MYA-333 / DSM 997 / K(L3346) / K-hell).